A 368-amino-acid chain; its full sequence is Ferrochelatase (368 aa).

Positions 209 and 290 each coordinate Fe cation. The tract at residues 347–368 (REEQEQQAHISREEARRLGADQ) is disordered.

This sequence belongs to the ferrochelatase family.

It localises to the cytoplasm. It carries out the reaction heme b + 2 H(+) = protoporphyrin IX + Fe(2+). It participates in porphyrin-containing compound metabolism; protoheme biosynthesis; protoheme from protoporphyrin-IX: step 1/1. Its function is as follows. Catalyzes the ferrous insertion into protoporphyrin IX. The chain is Ferrochelatase from Janthinobacterium sp. (strain Marseille) (Minibacterium massiliensis).